We begin with the raw amino-acid sequence, 89 residues long: Small ribosomal subunit protein uS15 (89 aa).

This sequence belongs to the universal ribosomal protein uS15 family. As to quaternary structure, part of the 30S ribosomal subunit. Forms a bridge to the 50S subunit in the 70S ribosome, contacting the 23S rRNA.

Its function is as follows. One of the primary rRNA binding proteins, it binds directly to 16S rRNA where it helps nucleate assembly of the platform of the 30S subunit by binding and bridging several RNA helices of the 16S rRNA. Forms an intersubunit bridge (bridge B4) with the 23S rRNA of the 50S subunit in the ribosome. The protein is Small ribosomal subunit protein uS15 of Mannheimia succiniciproducens (strain KCTC 0769BP / MBEL55E).